Reading from the N-terminus, the 193-residue chain is Molybdenum cofactor guanylyltransferase (193 aa).

GTP is bound by residues 8 to 10, Lys-21, Asp-67, and Asp-98; that span reads LAG. Asp-98 contributes to the Mg(2+) binding site.

The protein belongs to the MobA family. As to quaternary structure, monomer. It depends on Mg(2+) as a cofactor.

The protein resides in the cytoplasm. It catalyses the reaction Mo-molybdopterin + GTP + H(+) = Mo-molybdopterin guanine dinucleotide + diphosphate. In terms of biological role, transfers a GMP moiety from GTP to Mo-molybdopterin (Mo-MPT) cofactor (Moco or molybdenum cofactor) to form Mo-molybdopterin guanine dinucleotide (Mo-MGD) cofactor. The polypeptide is Molybdenum cofactor guanylyltransferase (Cereibacter sphaeroides (strain ATCC 17023 / DSM 158 / JCM 6121 / CCUG 31486 / LMG 2827 / NBRC 12203 / NCIMB 8253 / ATH 2.4.1.) (Rhodobacter sphaeroides)).